The chain runs to 236 residues: Ribosome assembly factor MRT4 (236 aa).

It belongs to the universal ribosomal protein uL10 family. Associates with the pre-60S ribosomal particle.

It localises to the nucleus. It is found in the nucleolus. Its subcellular location is the cytoplasm. Component of the ribosome assembly machinery. Nuclear paralog of the ribosomal protein P0, it binds pre-60S subunits at an early stage of assembly in the nucleolus, and is replaced by P0 in cytoplasmic pre-60S subunits and mature 80S ribosomes. The protein is Ribosome assembly factor MRT4 of Saccharomyces cerevisiae (strain ATCC 204508 / S288c) (Baker's yeast).